The chain runs to 119 residues: Large ribosomal subunit protein uL22c (119 aa).

The protein belongs to the universal ribosomal protein uL22 family. As to quaternary structure, part of the 50S ribosomal subunit.

It is found in the plastid. The protein resides in the chloroplast. Functionally, this protein binds specifically to 23S rRNA. In terms of biological role, the globular domain of the protein is located near the polypeptide exit tunnel on the outside of the subunit, while an extended beta-hairpin is found that lines the wall of the exit tunnel in the center of the 70S ribosome. The chain is Large ribosomal subunit protein uL22c (rpl22) from Chlorokybus atmophyticus (Soil alga).